Reading from the N-terminus, the 325-residue chain is GMP reductase (325 aa).

Residue Cys174 is the Thioimidate intermediate of the active site. 203-226 (LIADGGIRTHGDIAKSIRFGASMV) provides a ligand contact to NADP(+).

Belongs to the IMPDH/GMPR family. GuaC type 2 subfamily.

The catalysed reaction is IMP + NH4(+) + NADP(+) = GMP + NADPH + 2 H(+). Functionally, catalyzes the irreversible NADPH-dependent deamination of GMP to IMP. It functions in the conversion of nucleobase, nucleoside and nucleotide derivatives of G to A nucleotides, and in maintaining the intracellular balance of A and G nucleotides. The chain is GMP reductase from Staphylococcus aureus (strain JH9).